The chain runs to 549 residues: Calcium-dependent protein kinase 5 (549 aa).

Gly-2 carries N-myristoyl glycine lipidation. The interval 43 to 69 (DEPAGKKAPRGSAAAADAPHAASMKRG) is disordered. A compositionally biased stretch (low complexity) spans 52–64 (RGSAAAADAPHAA). The Protein kinase domain occupies 92–350 (YALGRKLGQG…AHEVLCHPWI (259 aa)). Residues 98 to 106 (LGQGQFGTT) and Lys-121 contribute to the ATP site. The active-site Proton acceptor is the Asp-216. The segment at 356-386 (APDRPLDPAVLSRIKQFSAMNKLKKMALRVI) is autoinhibitory domain. 4 consecutive EF-hand domains span residues 393–428 (EEIA…YGST), 429–464 (LKDT…LNKL), 465–500 (EREE…HNMP), and 501–534 (DAFL…GNMG). 19 residues coordinate Ca(2+): Asp-406, Asp-408, Ser-410, Glu-417, Asp-442, Asp-444, Ser-446, Thr-448, Glu-453, Asp-478, Asp-480, Ser-482, Tyr-484, Glu-489, Asp-512, Asp-514, Asp-516, Arg-518, and Glu-523.

It belongs to the protein kinase superfamily. Ser/Thr protein kinase family. CDPK subfamily.

Its subcellular location is the membrane. It carries out the reaction L-seryl-[protein] + ATP = O-phospho-L-seryl-[protein] + ADP + H(+). It catalyses the reaction L-threonyl-[protein] + ATP = O-phospho-L-threonyl-[protein] + ADP + H(+). Its activity is regulated as follows. Activated by calcium. Autophosphorylation may play an important role in the regulation of the kinase activity. In terms of biological role, may play a role in signal transduction pathways that involve calcium as a second messenger. The protein is Calcium-dependent protein kinase 5 of Oryza sativa subsp. japonica (Rice).